A 294-amino-acid polypeptide reads, in one-letter code: Tetraspanin-15 (294 aa).

Over 1-23 the chain is Cytoplasmic; the sequence is MPRGDSEQVRYCARFSYLWLKFS. A helical transmembrane segment spans residues 24-44; it reads LIIYSTVFWLIGALVLSVGIY. At 45–62 the chain is on the extracellular side; it reads AEVERQKYKTLESAFLAP. Residues 63-83 form a helical membrane-spanning segment; sequence AIILILLGVVMFMVSFIGVLA. The Cytoplasmic portion of the chain corresponds to 84–93; that stretch reads SLRDNLYLLQ. The helical transmembrane segment at 94–114 threads the bilayer; sequence AFMYILGICLIMELIGGVVAL. The Extracellular portion of the chain corresponds to 115 to 235; that stretch reads TFRNQTIDFL…WFMDNYTIMA (121 aa). N-linked (GlcNAc...) asparagine glycosylation is present at N118. Cystine bridges form between C154–C219, C155–C185, C171–C179, and C186–C198. N-linked (GlcNAc...) asparagine glycosylation is found at N189 and N230. Residues 236–256 traverse the membrane as a helical segment; the sequence is GILLGILLPQFLGVLLTLLYI. Residues 257 to 294 lie on the Cytoplasmic side of the membrane; that stretch reads TRVEDIIMEHSVTDGLLGPGAKPSVEAAGTGCCLCYPN.

The protein belongs to the tetraspanin (TM4SF) family. Interacts with ADAM10; the interaction influences ADAM10 substrate specificity, endocytosis and turnover. Palmitoylated.

The protein resides in the cell membrane. It localises to the late endosome membrane. Part of TspanC8 subgroup, composed of 6 members that interact with the transmembrane metalloprotease ADAM10. This interaction is required for ADAM10 exit from the endoplasmic reticulum and for enzymatic maturation and trafficking to the cell surface as well as substrate specificity. Different TspanC8/ADAM10 complexes have distinct substrates. Promotes ADAM10-mediated cleavage of CDH2. Negatively regulates ligand-induced Notch activity probably by regulating ADAM10 activity. The protein is Tetraspanin-15 of Homo sapiens (Human).